Reading from the N-terminus, the 265-residue chain is Auxin-responsive protein IAA22 (265 aa).

2 disordered regions span residues 54–88 (LSTP…ERRP) and 172–199 (DGRE…SPAM). Residues 65 to 88 (LMNKMKPCSDEGHGSRDAAQERRP) are compositionally biased toward basic and acidic residues. A PB1 domain is found at 91–194 (TMFVKVNLEG…GVDQVSERPD (104 aa)).

Belongs to the Aux/IAA family. As to quaternary structure, homodimers and heterodimers. In terms of tissue distribution, highly expressed in flowers. Expressed in roots and seedlings.

The protein localises to the nucleus. In terms of biological role, aux/IAA proteins are short-lived transcriptional factors that function as repressors of early auxin response genes at low auxin concentrations. In Oryza sativa subsp. japonica (Rice), this protein is Auxin-responsive protein IAA22 (IAA22).